The following is a 203-amino-acid chain: Probable nicotinate-nucleotide adenylyltransferase (203 aa).

This sequence belongs to the NadD family.

It catalyses the reaction nicotinate beta-D-ribonucleotide + ATP + H(+) = deamido-NAD(+) + diphosphate. The protein operates within cofactor biosynthesis; NAD(+) biosynthesis; deamido-NAD(+) from nicotinate D-ribonucleotide: step 1/1. Its function is as follows. Catalyzes the reversible adenylation of nicotinate mononucleotide (NaMN) to nicotinic acid adenine dinucleotide (NaAD). This chain is Probable nicotinate-nucleotide adenylyltransferase, found in Dictyoglomus turgidum (strain DSM 6724 / Z-1310).